A 258-amino-acid polypeptide reads, in one-letter code: Isoprenyl transferase 2 (258 aa).

Residue Asp-35 is part of the active site. A Mg(2+)-binding site is contributed by Asp-35. Residues 36–39 (GNRR), Trp-40, Arg-50, and 81–83 (SDD) contribute to the substrate site. Catalysis depends on Asn-84, which acts as the Proton acceptor. Substrate contacts are provided by residues Arg-87, Arg-207, and 213 to 215 (RLS). Residue Glu-226 coordinates Mg(2+).

This sequence belongs to the UPP synthase family. Homodimer. It depends on Mg(2+) as a cofactor.

Its function is as follows. Catalyzes the condensation of isopentenyl diphosphate (IPP) with allylic pyrophosphates generating different type of terpenoids. This Streptomyces coelicolor (strain ATCC BAA-471 / A3(2) / M145) protein is Isoprenyl transferase 2.